The sequence spans 736 residues: Protein kinase C epsilon type (736 aa).

Positions 1–117 (MVVFNGLLKI…NGSRHFEDWI (117 aa)) constitute a C2 domain. Ser-62 bears the Phosphoserine mark. The Phorbol-ester/DAG-type 1 zinc finger occupies 169 to 220 (GHKFMATYLRQPTYCSHCRDFIWGVIGKQGYQCQVCTCVVHKRCHELIITKV). Thr-228 is modified (phosphothreonine). The residue at position 234 (Ser-234) is a Phosphoserine. A Phorbol-ester/DAG-type 2 zinc finger spans residues 242 to 292 (PHKFGIHNYKVPTFCDHCGSLLWGLLRQGLQCKVCKMNVHRRCETNVAPNC). Thr-309 is subject to Phosphothreonine. Residues 310 to 356 (PDKITNSGQRRKKLIGGAESPQPTSGSSPSEEDRSKSAPTSPCDQEL) form a disordered region. Ser-316, Ser-329, and Ser-337 each carry phosphoserine. At Ser-346 the chain carries Phosphoserine; by GSK3-beta. Thr-349 bears the Phosphothreonine mark. The residue at position 350 (Ser-350) is a Phosphoserine; by MAPK11 and MAPK14. A Phosphoserine; by autocatalysis modification is found at Ser-368. The tract at residues 369–397 (FDNRGEEHRAASSTDGQLGSPENGEVRQG) is disordered. Ser-388 carries the post-translational modification Phosphoserine. One can recognise a Protein kinase domain in the interval 407–667 (FNFIKVLGKG…EDAIKQHPFF (261 aa)). Residues 413 to 421 (LGKGSFGKV) and Lys-436 each bind ATP. Asp-531 functions as the Proton acceptor in the catalytic mechanism. Thr-565 is modified (phosphothreonine; by PDPK1). The 69-residue stretch at 668–736 (KEIDWVLLEQ…FSYFGEDLMP (69 aa)) folds into the AGC-kinase C-terminal domain. Phosphothreonine is present on Thr-702. Thr-709 carries the phosphothreonine; by autocatalysis modification. Phosphoserine; by autocatalysis is present on Ser-728.

This sequence belongs to the protein kinase superfamily. AGC Ser/Thr protein kinase family. PKC subfamily. Forms a ternary complex with TRIM63 and RACK1/GN2BL1. Can form a complex with PDLIM5 and N-type calcium channel. Interacts with COPB1. Interacts with DGKQ. Interacts with STAT3. Interacts with YWHAB. Interacts with HSP90AB1; promotes functional activation in a heat shock-dependent manner. Interacts (via phorbol-ester/DAG-type 2 domain) with PRPH and VIM. Interacts with NLRP5/MATER. Post-translationally, phosphorylation on Thr-565 by PDPK1 triggers autophosphorylation on Ser-728. Phosphorylation in the hinge domain at Ser-350 by MAPK11 or MAPK14, Ser-346 by GSK3B and Ser-368 by autophosphorylation is required for interaction with YWHAB. In response to growth factors, phosphorylated at Thr-702 and Ser-728 by the mTORC2 complex, promoting autophosphorylation and activation of PRKCE.

It localises to the cytoplasm. The protein resides in the cytoskeleton. It is found in the cell membrane. The protein localises to the perinuclear region. Its subcellular location is the nucleus. It catalyses the reaction L-seryl-[protein] + ATP = O-phospho-L-seryl-[protein] + ADP + H(+). It carries out the reaction L-threonyl-[protein] + ATP = O-phospho-L-threonyl-[protein] + ADP + H(+). Novel PKCs (PRKCD, PRKCE, PRKCH and PRKCQ) are calcium-insensitive, but activated by diacylglycerol (DAG) and phosphatidylserine. Three specific sites; Thr-565 (activation loop of the kinase domain), Thr-709 (turn motif) and Ser-728 (hydrophobic region), need to be phosphorylated for its full activation. Its function is as follows. Calcium-independent, phospholipid- and diacylglycerol (DAG)-dependent serine/threonine-protein kinase that plays essential roles in the regulation of multiple cellular processes linked to cytoskeletal proteins, such as cell adhesion, motility, migration and cell cycle, functions in neuron growth and ion channel regulation, and is involved in immune response, cancer cell invasion and regulation of apoptosis. Mediates cell adhesion to the extracellular matrix via integrin-dependent signaling, by mediating angiotensin-2-induced activation of integrin beta-1 (ITGB1) in cardiac fibroblasts. Phosphorylates MARCKS, which phosphorylates and activates PTK2/FAK, leading to the spread of cardiomyocytes. Involved in the control of the directional transport of ITGB1 in mesenchymal cells by phosphorylating vimentin (VIM), an intermediate filament (IF) protein. In epithelial cells, associates with and phosphorylates keratin-8 (KRT8), which induces targeting of desmoplakin at desmosomes and regulates cell-cell contact. Phosphorylates IQGAP1, which binds to CDC42, mediating epithelial cell-cell detachment prior to migration. During cytokinesis, forms a complex with YWHAB, which is crucial for daughter cell separation, and facilitates abscission by a mechanism which may implicate the regulation of RHOA. In cardiac myocytes, regulates myofilament function and excitation coupling at the Z-lines, where it is indirectly associated with F-actin via interaction with COPB1. During endothelin-induced cardiomyocyte hypertrophy, mediates activation of PTK2/FAK, which is critical for cardiomyocyte survival and regulation of sarcomere length. Plays a role in the pathogenesis of dilated cardiomyopathy via persistent phosphorylation of troponin I (TNNI3). Involved in nerve growth factor (NFG)-induced neurite outgrowth and neuron morphological change independently of its kinase activity, by inhibition of RHOA pathway, activation of CDC42 and cytoskeletal rearrangement. May be involved in presynaptic facilitation by mediating phorbol ester-induced synaptic potentiation. Phosphorylates gamma-aminobutyric acid receptor subunit gamma-2 (GABRG2), which reduces the response of GABA receptors to ethanol and benzodiazepines and may mediate acute tolerance to the intoxicating effects of ethanol. Upon PMA treatment, phosphorylates the capsaicin- and heat-activated cation channel TRPV1, which is required for bradykinin-induced sensitization of the heat response in nociceptive neurons. Is able to form a complex with PDLIM5 and N-type calcium channel, and may enhance channel activities and potentiates fast synaptic transmission by phosphorylating the pore-forming alpha subunit CACNA1B (CaV2.2). Downstream of TLR4, plays an important role in the lipopolysaccharide (LPS)-induced immune response by phosphorylating and activating TICAM2/TRAM, which in turn activates the transcription factor IRF3 and subsequent cytokines production. In differentiating erythroid progenitors, is regulated by EPO and controls the protection against the TNFSF10/TRAIL-mediated apoptosis, via BCL2. May be involved in the regulation of the insulin-induced phosphorylation and activation of AKT1. Phosphorylates NLRP5/MATER and may thereby modulate AKT pathway activation in cumulus cells. Phosphorylates and activates LRRK1, which phosphorylates RAB proteins involved in intracellular trafficking. In Oryctolagus cuniculus (Rabbit), this protein is Protein kinase C epsilon type (PRKCE).